A 1755-amino-acid chain; its full sequence is Transposon Ty1-PL Gag-Pol polyprotein (1755 aa).

Composition is skewed to polar residues over residues 1–23 (MESQQLSQHSPISHGSACASVTS), 48–60 (TKANSQQTTTPAS), and 127–152 (QSQFPQYPSSVGTPLSTPSPESGNTF). 3 disordered regions span residues 1–93 (MESQ…MMTQ), 126–174 (PQSQ…PPPM), and 352–421 (GSRN…SKST). The segment covering 153-165 (TDSSSADSDMTST) has biased composition (low complexity). The segment at 299-401 (NNGIHINNKV…NSKSKTARAH (103 aa)) is RNA-binding. The segment covering 402 to 418 (NVSTSNNSPSTDNDSIS) has biased composition (low complexity). S416 is subject to Phosphoserine. D461 acts as the For protease activity; shared with dimeric partner in catalysis. The interval 583–640 (NVHTSESTRKYPYPFIHRMLAHANAQTIRYSLKNNTITYFNESDVDWSSAIDYQCPDC) is integrase-type zinc finger-like. The 176-residue stretch at 660-835 (NSYEPFQYLH…AGLDISTLLP (176 aa)) folds into the Integrase catalytic domain. The Mg(2+) site is built by D671 and D736. Disordered regions lie at residues 956 to 1087 (SKAV…ETEK), 1092 to 1111 (RSPSIDASPPENNSSHNIVP), and 1130 to 1187 (DLPL…DNET). Positions 960 to 969 (SPTDSTPPST) are enriched in low complexity. The segment covering 1005–1015 (STPQISNIEST) has biased composition (polar residues). Residues 1038–1053 (ESSHASKSKDFRHSDS) show a composition bias toward basic and acidic residues. 2 stretches are compositionally biased toward polar residues: residues 1054 to 1082 (YSENETNHTNVPISSTGGTNNKTVPQISD) and 1101 to 1111 (PENNSSHNIVP). Positions 1178–1212 (KKRSLEDNETEIKVSRDTWNTKNMRSLEPPRSKKR) match the Bipartite nuclear localization signal motif. The Reverse transcriptase Ty1/copia-type domain maps to 1338-1476 (NNYYITQLDI…DILGLEIKYQ (139 aa)). Mg(2+)-binding residues include D1346, D1427, D1428, D1610, E1652, and D1685. One can recognise an RNase H Ty1/copia-type domain in the interval 1610–1752 (DASYGNQPYY…IKTFKLLTNK (143 aa)).

In terms of assembly, the capsid protein forms a homotrimer, from which the VLPs are assembled. The protease is a homodimer, whose active site consists of two apposed aspartic acid residues. Initially, virus-like particles (VLPs) are composed of the structural unprocessed proteins Gag and Gag-Pol, and also contain the host initiator methionine tRNA (tRNA(i)-Met) which serves as a primer for minus-strand DNA synthesis, and a dimer of genomic Ty RNA. Processing of the polyproteins occurs within the particle and proceeds by an ordered pathway, called maturation. First, the protease (PR) is released by autocatalytic cleavage of the Gag-Pol polyprotein yielding capsid protein p45 and a Pol-p154 precursor protein. This cleavage is a prerequisite for subsequent processing of Pol-p154 at the remaining sites to release the mature structural and catalytic proteins. Maturation takes place prior to the RT reaction and is required to produce transposition-competent VLPs.

It is found in the cytoplasm. Its subcellular location is the nucleus. The catalysed reaction is DNA(n) + a 2'-deoxyribonucleoside 5'-triphosphate = DNA(n+1) + diphosphate. It catalyses the reaction Endonucleolytic cleavage to 5'-phosphomonoester.. Capsid protein (CA) is the structural component of the virus-like particle (VLP), forming the shell that encapsulates the retrotransposons dimeric RNA genome. The particles are assembled from trimer-clustered units and there are holes in the capsid shells that allow for the diffusion of macromolecules. CA also has nucleocapsid-like chaperone activity, promoting primer tRNA(i)-Met annealing to the multipartite primer-binding site (PBS), dimerization of Ty1 RNA and initiation of reverse transcription. Functionally, the aspartyl protease (PR) mediates the proteolytic cleavages of the Gag and Gag-Pol polyproteins after assembly of the VLP. In terms of biological role, reverse transcriptase/ribonuclease H (RT) is a multifunctional enzyme that catalyzes the conversion of the retro-elements RNA genome into dsDNA within the VLP. The enzyme displays a DNA polymerase activity that can copy either DNA or RNA templates, and a ribonuclease H (RNase H) activity that cleaves the RNA strand of RNA-DNA heteroduplexes during plus-strand synthesis and hydrolyzes RNA primers. The conversion leads to a linear dsDNA copy of the retrotransposon that includes long terminal repeats (LTRs) at both ends. Its function is as follows. Integrase (IN) targets the VLP to the nucleus, where a subparticle preintegration complex (PIC) containing at least integrase and the newly synthesized dsDNA copy of the retrotransposon must transit the nuclear membrane. Once in the nucleus, integrase performs the integration of the dsDNA into the host genome. This is Transposon Ty1-PL Gag-Pol polyprotein (TY1B-PL) from Saccharomyces cerevisiae (strain ATCC 204508 / S288c) (Baker's yeast).